The primary structure comprises 396 residues: MKSNNALIVILGTVTLDAVGIGLVMPVLPGLLRDIVHSDSIASHYGVLLALYALMQFLCAPVLGALSDRFGRRPVLLASLLGATIDYAIMATTPVLWILYAGRIVAGITGATGAVAGAYIADITDGEDRARHFGLMSACFGVGMVAGPVAGGLLGAISLHAPFLAAAVLNGLNLLLGCFLMQESHKGERRPMPLRAFNPVSSFRWARGMTIVAALMTVFFIMQLVGQVPAALWVIFGEDRFRWSATMIGLSLAVFGILHALAQAFVTGPATKRFGEKQAIIAGMAADALGYVLLAFATRGWMAFPIMILLASGGIGMPALQAMLSRQVDDDHQGQLQGSLAALTSLTSITGPLIVTAIYAASASTWNGLAWIVGAALYLVCLPALRRGAWSRATST.

Topologically, residues 1 to 6 are cytoplasmic; that stretch reads MKSNNA. A helical membrane pass occupies residues 7–27; it reads LIVILGTVTLDAVGIGLVMPV. The Periplasmic portion of the chain corresponds to 28 to 45; the sequence is LPGLLRDIVHSDSIASHY. Residues 46–66 traverse the membrane as a helical segment; it reads GVLLALYALMQFLCAPVLGAL. Residues 67–79 are Cytoplasmic-facing; the sequence is SDRFGRRPVLLAS. Residues 80 to 100 form a helical membrane-spanning segment; that stretch reads LLGATIDYAIMATTPVLWILY. The Periplasmic segment spans residues 101–103; it reads AGR. A helical transmembrane segment spans residues 104–124; the sequence is IVAGITGATGAVAGAYIADIT. Residues 125-138 lie on the Cytoplasmic side of the membrane; that stretch reads DGEDRARHFGLMSA. A helical transmembrane segment spans residues 139 to 159; the sequence is CFGVGMVAGPVAGGLLGAISL. A topological domain (periplasmic) is located at residue histidine 160. The helical transmembrane segment at 161 to 181 threads the bilayer; the sequence is APFLAAAVLNGLNLLLGCFLM. The Cytoplasmic portion of the chain corresponds to 182–210; sequence QESHKGERRPMPLRAFNPVSSFRWARGMT. The helical transmembrane segment at 211-231 threads the bilayer; sequence IVAALMTVFFIMQLVGQVPAA. The Periplasmic segment spans residues 232 to 246; the sequence is LWVIFGEDRFRWSAT. Residues 247-267 form a helical membrane-spanning segment; the sequence is MIGLSLAVFGILHALAQAFVT. The Cytoplasmic portion of the chain corresponds to 268–277; the sequence is GPATKRFGEK. A helical membrane pass occupies residues 278-298; it reads QAIIAGMAADALGYVLLAFAT. Residue arginine 299 is a topological domain, periplasmic. Residues 300–320 traverse the membrane as a helical segment; it reads GWMAFPIMILLASGGIGMPAL. The Cytoplasmic segment spans residues 321–339; sequence QAMLSRQVDDDHQGQLQGS. A helical membrane pass occupies residues 340-360; the sequence is LAALTSLTSITGPLIVTAIYA. The Periplasmic segment spans residues 361–364; it reads ASAS. Residues 365 to 385 form a helical membrane-spanning segment; that stretch reads TWNGLAWIVGAALYLVCLPAL. The Cytoplasmic segment spans residues 386-396; that stretch reads RRGAWSRATST.

This sequence belongs to the major facilitator superfamily. TCR/Tet family.

The protein localises to the cell inner membrane. Resistance to tetracycline by an active tetracycline efflux. This is an energy-dependent process that decreases the accumulation of the antibiotic in whole cells. This protein functions as a metal-tetracycline/H(+) antiporter. In Escherichia coli, this protein is Tetracycline resistance protein, class C (tetA).